The chain runs to 168 residues: Thiol peroxidase (168 aa).

A Thioredoxin domain is found at 19–168; the sequence is PQAGSKAQAF…YDAALNVLKA (150 aa). Cysteine 61 serves as the catalytic Cysteine sulfenic acid (-SOH) intermediate. A disulfide bridge links cysteine 61 with cysteine 95.

The protein belongs to the peroxiredoxin family. Tpx subfamily. As to quaternary structure, homodimer.

It carries out the reaction a hydroperoxide + [thioredoxin]-dithiol = an alcohol + [thioredoxin]-disulfide + H2O. Its function is as follows. Thiol-specific peroxidase that catalyzes the reduction of hydrogen peroxide and organic hydroperoxides to water and alcohols, respectively. Plays a role in cell protection against oxidative stress by detoxifying peroxides. This is Thiol peroxidase from Salmonella typhi.